A 128-amino-acid polypeptide reads, in one-letter code: Large ribosomal subunit protein bL12 (128 aa).

Belongs to the bacterial ribosomal protein bL12 family. Homodimer. Part of the ribosomal stalk of the 50S ribosomal subunit. Forms a multimeric L10(L12)X complex, where L10 forms an elongated spine to which 2 to 4 L12 dimers bind in a sequential fashion. Binds GTP-bound translation factors.

Its function is as follows. Forms part of the ribosomal stalk which helps the ribosome interact with GTP-bound translation factors. Is thus essential for accurate translation. The chain is Large ribosomal subunit protein bL12 from Streptomyces antibioticus.